Here is a 346-residue protein sequence, read N- to C-terminus: D-alanine--D-alanine ligase (346 aa).

The region spanning 134–340 is the ATP-grasp domain; that stretch reads KFLAESLGVK…IDYTYIHSIQ (207 aa). 161-212 contributes to the ATP binding site; sequence EYPVIIKPVRLGSSIGVSIVKSEAELDYALDVAFEFDNDVIVEPFIDGVKEF. 3 residues coordinate Mg(2+): aspartate 284, glutamate 296, and asparagine 298.

The protein belongs to the D-alanine--D-alanine ligase family. The cofactor is Mg(2+). Requires Mn(2+) as cofactor.

Its subcellular location is the cytoplasm. The enzyme catalyses 2 D-alanine + ATP = D-alanyl-D-alanine + ADP + phosphate + H(+). Its pathway is cell wall biogenesis; peptidoglycan biosynthesis. Its function is as follows. Cell wall formation. The polypeptide is D-alanine--D-alanine ligase (Sulfurovum sp. (strain NBC37-1)).